The following is a 565-amino-acid chain: Formate--tetrahydrofolate ligase (565 aa).

Residue 73 to 80 (TPAGEGKS) participates in ATP binding.

The protein belongs to the formate--tetrahydrofolate ligase family.

The enzyme catalyses (6S)-5,6,7,8-tetrahydrofolate + formate + ATP = (6R)-10-formyltetrahydrofolate + ADP + phosphate. The protein operates within one-carbon metabolism; tetrahydrofolate interconversion. The protein is Formate--tetrahydrofolate ligase of Arthrobacter sp. (strain FB24).